The sequence spans 232 residues: Cytidylate kinase (232 aa).

19-27 serves as a coordination point for ATP; the sequence is GPAGVGKTT.

The protein belongs to the cytidylate kinase family. Type 1 subfamily.

It is found in the cytoplasm. The catalysed reaction is CMP + ATP = CDP + ADP. It carries out the reaction dCMP + ATP = dCDP + ADP. The polypeptide is Cytidylate kinase (Nitratidesulfovibrio vulgaris (strain ATCC 29579 / DSM 644 / CCUG 34227 / NCIMB 8303 / VKM B-1760 / Hildenborough) (Desulfovibrio vulgaris)).